Here is a 447-residue protein sequence, read N- to C-terminus: Thiol-specific monooxygenase (447 aa).

FAD is bound by residues 13 to 17 (GAGPS), glutamate 38, 46 to 47 (VW), 91 to 92 (NT), and 137 to 138 (DV). An NADP(+)-binding site is contributed by 90–91 (TN). 223 to 226 (SAND) contributes to the NADP(+) binding site.

It belongs to the FMO family. As to quaternary structure, monomer. FAD is required as a cofactor.

Flavin-dependent oxidation of thiol-containing compounds. Probably required for the correct folding of disulfide-bonded proteins. The protein is Thiol-specific monooxygenase (fmo1) of Schizosaccharomyces pombe (strain 972 / ATCC 24843) (Fission yeast).